The primary structure comprises 483 residues: Aspartyl/glutamyl-tRNA(Asn/Gln) amidotransferase subunit B (483 aa).

It belongs to the GatB/GatE family. GatB subfamily. In terms of assembly, heterotrimer of A, B and C subunits.

It carries out the reaction L-glutamyl-tRNA(Gln) + L-glutamine + ATP + H2O = L-glutaminyl-tRNA(Gln) + L-glutamate + ADP + phosphate + H(+). It catalyses the reaction L-aspartyl-tRNA(Asn) + L-glutamine + ATP + H2O = L-asparaginyl-tRNA(Asn) + L-glutamate + ADP + phosphate + 2 H(+). In terms of biological role, allows the formation of correctly charged Asn-tRNA(Asn) or Gln-tRNA(Gln) through the transamidation of misacylated Asp-tRNA(Asn) or Glu-tRNA(Gln) in organisms which lack either or both of asparaginyl-tRNA or glutaminyl-tRNA synthetases. The reaction takes place in the presence of glutamine and ATP through an activated phospho-Asp-tRNA(Asn) or phospho-Glu-tRNA(Gln). The polypeptide is Aspartyl/glutamyl-tRNA(Asn/Gln) amidotransferase subunit B (Anaeromyxobacter sp. (strain Fw109-5)).